A 125-amino-acid chain; its full sequence is Large ribosomal subunit protein bL12 (125 aa).

This sequence belongs to the bacterial ribosomal protein bL12 family. Homodimer. Part of the ribosomal stalk of the 50S ribosomal subunit. Forms a multimeric L10(L12)X complex, where L10 forms an elongated spine to which 2 to 4 L12 dimers bind in a sequential fashion. Binds GTP-bound translation factors.

Its function is as follows. Forms part of the ribosomal stalk which helps the ribosome interact with GTP-bound translation factors. Is thus essential for accurate translation. In Rhizobium johnstonii (strain DSM 114642 / LMG 32736 / 3841) (Rhizobium leguminosarum bv. viciae), this protein is Large ribosomal subunit protein bL12.